The chain runs to 217 residues: Uracil-DNA glycosylase (217 aa).

D62 acts as the Proton acceptor in catalysis.

This sequence belongs to the uracil-DNA glycosylase (UDG) superfamily. UNG family.

It is found in the cytoplasm. It catalyses the reaction Hydrolyzes single-stranded DNA or mismatched double-stranded DNA and polynucleotides, releasing free uracil.. Its function is as follows. Excises uracil residues from the DNA which can arise as a result of misincorporation of dUMP residues by DNA polymerase or due to deamination of cytosine. The sequence is that of Uracil-DNA glycosylase from Streptococcus mutans serotype c (strain ATCC 700610 / UA159).